Consider the following 509-residue polypeptide: ATP synthase subunit alpha (509 aa).

ATP is bound at residue Gly169–Thr176.

It belongs to the ATPase alpha/beta chains family. F-type ATPases have 2 components, CF(1) - the catalytic core - and CF(0) - the membrane proton channel. CF(1) has five subunits: alpha(3), beta(3), gamma(1), delta(1), epsilon(1). CF(0) has three main subunits: a(1), b(2) and c(9-12). The alpha and beta chains form an alternating ring which encloses part of the gamma chain. CF(1) is attached to CF(0) by a central stalk formed by the gamma and epsilon chains, while a peripheral stalk is formed by the delta and b chains.

Its subcellular location is the cell inner membrane. The enzyme catalyses ATP + H2O + 4 H(+)(in) = ADP + phosphate + 5 H(+)(out). Its function is as follows. Produces ATP from ADP in the presence of a proton gradient across the membrane. The alpha chain is a regulatory subunit. This Brucella ovis (strain ATCC 25840 / 63/290 / NCTC 10512) protein is ATP synthase subunit alpha.